A 413-amino-acid polypeptide reads, in one-letter code: Phosphatidylcholine-sterol acyltransferase (413 aa).

The signal sequence occupies residues 1 to 22 (GRTGAGFTLLTLLLLLPQPTSQ). A disulfide bridge connects residues Cys-72 and Cys-96. Asn-106 carries an N-linked (GlcNAc...) asparagine glycan. Ser-203 (charge relay system) is an active-site residue. Ser-203 functions as the Nucleophile in the catalytic mechanism. N-linked (GlcNAc...) asparagine glycosylation occurs at Asn-294. A disulfide bond links Cys-335 and Cys-378. Residues Asp-367 and His-399 each act as charge relay system in the active site. Asn-406 is a glycosylation site (N-linked (GlcNAc...) asparagine).

Belongs to the AB hydrolase superfamily. Lipase family. As to expression, detected in blood plasma (at protein level). Expressed in liver, brain and adrenal glands. Lower expression in testes. In laying hens, expressed higher in brain than in liver. In roosters, higher levels in liver than in brain.

The protein resides in the secreted. It catalyses the reaction a sterol + a 1,2-diacyl-sn-glycero-3-phosphocholine = a sterol ester + a 1-acyl-sn-glycero-3-phosphocholine. With respect to regulation, APOA1 is the most potent activator in plasma. Also activated by APOE, APOC1 and APOA4. Functionally, central enzyme in the extracellular metabolism of plasma lipoproteins. Synthesized mainly in the liver and secreted into plasma where it converts cholesterol and phosphatidylcholines (lecithins) to cholesteryl esters and lysophosphatidylcholines on the surface of high and low density lipoproteins (HDLs and LDLs). The cholesterol ester is then transported back to the liver. Also produced in the brain by primary astrocytes, and esterifies free cholesterol on nascent APOE-containing lipoproteins secreted from glia and influences cerebral spinal fluid (CSF) APOE- and APOA1 levels. Together with APOE and the cholesterol transporter ABCA1, plays a key role in the maturation of glial-derived, nascent lipoproteins. Required for remodeling high-density lipoprotein particles into their spherical forms. Has a preference for plasma 16:0-18:2 or 18:O-18:2 phosphatidylcholines. The chain is Phosphatidylcholine-sterol acyltransferase (LCAT) from Gallus gallus (Chicken).